Here is a 378-residue protein sequence, read N- to C-terminus: Ferrochelatase (378 aa).

2 residues coordinate Fe cation: histidine 214 and glutamate 295.

It belongs to the ferrochelatase family.

Its subcellular location is the cytoplasm. The enzyme catalyses heme b + 2 H(+) = protoporphyrin IX + Fe(2+). The protein operates within porphyrin-containing compound metabolism; protoheme biosynthesis; protoheme from protoporphyrin-IX: step 1/1. Its function is as follows. Catalyzes the ferrous insertion into protoporphyrin IX. This Hydrogenovibrio crunogenus (strain DSM 25203 / XCL-2) (Thiomicrospira crunogena) protein is Ferrochelatase.